The primary structure comprises 398 residues: Alpha-2,8-sialyltransferase 8F (398 aa).

Residues 1-3 lie on the Cytoplasmic side of the membrane; it reads MRP. Residues 4–24 form a helical; Signal-anchor for type II membrane protein membrane-spanning segment; it reads GGALLALLASLLLLLLLRLLW. Residues 25–398 are Lumenal-facing; the sequence is CPADAPGRAR…KLQFSKCEVA (374 aa). N-linked (GlcNAc...) asparagine glycosylation is found at asparagine 66, asparagine 93, asparagine 151, and asparagine 196. 2 cysteine pairs are disulfide-bonded: cysteine 186/cysteine 335 and cysteine 200/cysteine 395. Substrate-binding positions include asparagine 214, 236 to 238, and 322 to 324; these read NPS and STG. Histidine 370 serves as the catalytic Proton donor/acceptor.

Belongs to the glycosyltransferase 29 family.

It localises to the golgi apparatus membrane. It catalyses the reaction a ganglioside GM3 + CMP-N-acetyl-beta-neuraminate = a ganglioside GD3 + CMP + H(+). The catalysed reaction is a ganglioside GM3 (d18:1(4E)) + CMP-N-acetyl-beta-neuraminate = a ganglioside GD3 (d18:1(4E)) + CMP + H(+). It carries out the reaction a ganglioside GD1a (d18:1(4E)) + CMP-N-acetyl-beta-neuraminate = a ganglioside GT1a (d18:1(4E)) + CMP + H(+). The enzyme catalyses a ganglioside GD1a + CMP-N-acetyl-beta-neuraminate = a ganglioside GT1a + CMP + H(+). It catalyses the reaction a ganglioside GM1b (d18:1(4E)) + CMP-N-acetyl-beta-neuraminate = a ganglioside GD1c (d18:1(4E)) + CMP + H(+). The catalysed reaction is a ganglioside GM1b + CMP-N-acetyl-beta-neuraminate = a ganglioside GD1c + CMP + H(+). It carries out the reaction a ganglioside GM4 (d18:1(4E)) + CMP-N-acetyl-beta-neuraminate = an N-acetyl-alpha-neuraminosyl-(2-&gt;8)-N-acetyl-alpha-neuraminosyl-(2-&gt;3)-beta-D-galactosyl-(1&lt;-&gt;1')-N-acylsphing-4-enine + CMP + H(+). The enzyme catalyses N-acetyl-alpha-neuraminosyl-(2-&gt;3)-beta-D-galactosyl-(1&lt;-&gt;1')-ceramide + CMP-N-acetyl-beta-neuraminate = N-acetyl-alpha-neuraminosyl-(2-&gt;8)-N-acetyl-alpha-neuraminosyl-(2-&gt;3)-beta-D-galactosyl-(1&lt;-&gt;1')-ceramide + CMP + H(+). It catalyses the reaction a ganglioside GT1b (d18:1(4E)) + CMP-N-acetyl-beta-neuraminate = a ganglioside GQ1b (d18:1(4E)) + CMP + H(+). The catalysed reaction is a ganglioside GT1b + CMP-N-acetyl-beta-neuraminate = a ganglioside GQ1b + CMP + H(+). The protein operates within protein modification; protein glycosylation. Alpha-2,8-sialyltransferase that prefers O-glycans to N-glycans or glycolipids as acceptor substrates. The minimal acceptor substrate is the NeuAc-alpha-2,3(6)-Gal sequence at the non-reducing end of their carbohydrate groups. In Pan troglodytes (Chimpanzee), this protein is Alpha-2,8-sialyltransferase 8F (ST8SIA6).